A 383-amino-acid polypeptide reads, in one-letter code: Cysteine protease StiP (383 aa).

The protein belongs to the cysteine protease StiP family. Is probably processed via an autocatalytic removal of a proregion of about 100 amino acids.

With respect to regulation, is inhibited by bromopyruvate in vitro. Activity is not affected by the presence of tellurite. Its function is as follows. Cysteine protease that may play a role in regulating cell morphology in response to stressful conditions which likely cause oxidative damage. Appears to catalyze its own cleavage, which probably leads to its activation. This chain is Cysteine protease StiP (stiP), found in Acinetobacter baylyi (strain ATCC 33305 / BD413 / ADP1).